A 452-amino-acid chain; its full sequence is Solute carrier family 52, riboflavin transporter, member 3-B (452 aa).

5 consecutive transmembrane segments (helical) span residues 11–31, 38–58, 73–93, 111–131, and 138–158; these read LFGIGSWVAINGMWVELPLIV, WLLPSYLTIIIQMANIGPLFI, PVIYTIVAVGVVATFLLAFLW, LSFLLSVVDCTSSVTFLPFMM, and LTTYFIGEGLSGLVPALVALV. 4 N-linked (GlcNAc...) asparagine glycosylation sites follow: Asn-168, Asn-174, Asn-179, and Asn-193. Helical transmembrane passes span 199–219, 285–305, 321–341, 344–364, 381–401, and 412–432; these read FFLFLSAMMMVCLGAFLLLNL, VFIFVVLAWVNALTNAVLPSV, AATLSSVANPVACFIAMFVPI, LVLMGVLTVTGTGFGAYIMAM, ALIVITWVIFVLSLSYVKVII, and ALVWCGAVVQLGSMLGALSMF.

The protein belongs to the riboflavin transporter family.

Its subcellular location is the cell membrane. It catalyses the reaction riboflavin(in) = riboflavin(out). Functionally, plasma membrane transporter mediating the uptake by cells of the water soluble vitamin B2/riboflavin that plays a key role in biochemical oxidation-reduction reactions of the carbohydrate, lipid, and amino acid metabolism. This Danio rerio (Zebrafish) protein is Solute carrier family 52, riboflavin transporter, member 3-B (slc52a3b).